Here is a 637-residue protein sequence, read N- to C-terminus: Chaperone protein DnaK (637 aa).

Phosphothreonine; by autocatalysis is present on T196. Disordered regions lie at residues 503 to 525 (AEINKMKDDAKQHADEDKKRKEE) and 598 to 637 (SGAGAAQAQPEAPQNSGSSQSSGGDGAVNAEYEVINDDKK). Low complexity predominate over residues 598–619 (SGAGAAQAQPEAPQNSGSSQSS).

The protein belongs to the heat shock protein 70 family.

Its function is as follows. Acts as a chaperone. The chain is Chaperone protein DnaK from Chlorobium chlorochromatii (strain CaD3).